Consider the following 77-residue polypeptide: Apelin (77 aa).

The first 22 residues, 1–22, serve as a signal peptide directing secretion; that stretch reads MNLRLCVQALLLLWLSLTAVCG. The propeptide occupies 23–41; sequence GSLMPLPDGNGLEDGNVRH. A disordered region spans residues 43–77; that stretch reads VQPRGSRNGPGPWQGGRRKFRRQRPRLSHKGPMPF. A compositionally biased stretch (basic residues) spans 58–71; sequence GRRKFRRQRPRLSH.

Belongs to the apelin family. Post-translationally, several active peptides may be produced by proteolytic processing of the peptide precursor. As to expression, expressed in the brain with highest levels in the frontal cortex, thalamus, hypothalamus and midbrain. Secreted by the mammary gland into the colostrum and the milk.

It localises to the secreted. The protein localises to the extracellular space. Its function is as follows. Peptide hormone that functions as endogenous ligand for the G-protein-coupled apelin receptor (APLNR/APJ), that plays a role in cadiovascular homeostasis. Functions as a balanced agonist activating both G(i) protein pathway and beta-arrestin pathway of APLNR. Downstream G proteins activation, apelin can inhibit cAMP production and activate key intracellular effectors such as ERKs. On the other hand, APLNR activation induces beta-arrestin recruitment to the membrane leading to desensitization and internalization of the receptor. Apelin blunts cardiac hypertrophic induction from APLNR on response to pathological stimuli, but also induces myocardial hypertrophy under normal conditions. Apelin-36 dissociates more hardly than (pyroglu)apelin-13 from APLNR. Involved in the regulation of cardiac precursor cell movements during gastrulation and heart morphogenesis. Has an inhibitory effect on cytokine production in response to T-cell receptor/CD3 cross-linking; the oral intake of apelin in the colostrum and the milk might therefore modulate immune responses in neonates. Plays a role in early coronary blood vessels formation. Mediates myocardial contractility in an ERK1/2-dependent manner. May also have a role in the central control of body fluid homeostasis by influencing vasopressin release and drinking behavior. In terms of biological role, (Microbial infection) Endogenous ligand for the apelin receptor (APLNR), an alternative coreceptor with CD4 for HIV-1 infection. Inhibits HIV-1 entry in cells coexpressing CD4 and APLNR. Apelin-36 has a greater inhibitory activity on HIV infection than other synthetic apelin derivatives. This chain is Apelin, found in Homo sapiens (Human).